Here is a 198-residue protein sequence, read N- to C-terminus: Recombination protein RecR (198 aa).

The C4-type zinc-finger motif lies at 57-72 (CSSCGHITDKDPCYIC). Residues 80-175 (SIICVVQDPK…KITRIAHGLP (96 aa)) form the Toprim domain.

It belongs to the RecR family.

Functionally, may play a role in DNA repair. It seems to be involved in an RecBC-independent recombinational process of DNA repair. It may act with RecF and RecO. This chain is Recombination protein RecR, found in Anoxybacillus flavithermus (strain DSM 21510 / WK1).